Consider the following 353-residue polypeptide: Diacetylchitobiose uptake system permease protein NgcF (353 aa).

The segment at 1 to 24 (MKDTIPTAETASRRPEPAARGGRP) is disordered. 6 helical membrane-spanning segments follow: residues 36–56 (FFLAFLGVPLAIFVIFVLIPF), 100–120 (LLAAFVPLVTLTLALGVAVAI), 141–161 (IISFFPYVVPAIIVGLIWAQM), 197–217 (VMFVIVWGLVGFYAVLFIAAI), 254–274 (AYIYLGIAALDAFVYVQAMVP), and 303–323 (TAMGVVLAAVTLVFAALVFLV). Residues 95–320 (LRNVALLAAF…AVTLVFAALV (226 aa)) form the ABC transmembrane type-1 domain. A disordered region spans residues 329–353 (GGEGESKRKAPGSRARRAAAKGGAR). The segment covering 337–353 (KAPGSRARRAAAKGGAR) has biased composition (basic residues).

The protein belongs to the binding-protein-dependent transport system permease family. In terms of assembly, the complex is composed of two ATP-binding proteins (MsiK), two transmembrane proteins (NgcF and NgcG) and a solute-binding protein (NgcE).

It is found in the cell membrane. Its function is as follows. Part of the ABC transporter complex NgcEFG-MsiK involved in N,N'-diacetylchitobiose ((GlcNAc)2) uptake. Responsible for the translocation of the substrate across the membrane. The sequence is that of Diacetylchitobiose uptake system permease protein NgcF from Streptomyces coelicolor (strain ATCC BAA-471 / A3(2) / M145).